Here is a 143-residue protein sequence, read N- to C-terminus: Synuclein (143 aa).

3 repeat units span residues 20-30 (EKTKQGVQDAA), 31-41 (EKTKQGVQDAA), and 42-52 (EKTKEGVMYVG). Positions 20-78 (EKTKQGVQDAAEKTKQGVQDAAEKTKEGVMYVGTKTKEGVVQSVNTVTEKTKEQANVVG) are 5 X 11 AA tandem repeats of [EGST]-K-T-K-[EQ]-[GQ]-[VA]-X(4). Residues 53–67 (TKTKEGVVQSVNTVT) form a 4; approximate repeat. Copy 5 of the repeat occupies 68 to 78 (EKTKEQANVVG). A disordered region spans residues 113-143 (REIPAEQVAEGKQTTQEPLVEATEATEETGK).

It belongs to the synuclein family. In terms of tissue distribution, nervous system tissue. Found in the electric lobe, the brain and the spinal cord.

The protein resides in the nucleus. Functionally, may have a role in synaptic regulation or signal transduction. This Tetronarce californica (Pacific electric ray) protein is Synuclein.